A 266-amino-acid chain; its full sequence is MNQPSIPPIEDVQNTPDTRQLAIDKVGIKSIRHPVKVKDKTGGVQHTVATFNMYVYLPHNFKGTHMSRFVEILNNNEREISVESFESILRAMVERLDAESGHVEMTFPYFVNKTAPVSGVQSLSDYEVTFIGEINKGKYDITVKVVVPVTSLCPCSKKISDYGAHNQRSHVTVTALINDFIWVEDIIRMVEDQASCEVYGLLKRPDEKYVTERAYDNPKFVEDIVRDVAAQLNIETRIVSYTVESENFESIHNHSAYALIEKDKRK.

It belongs to the GTP cyclohydrolase IV family.

The catalysed reaction is GTP + H2O = 7,8-dihydroneopterin 3'-triphosphate + formate + H(+). The protein operates within cofactor biosynthesis; 7,8-dihydroneopterin triphosphate biosynthesis; 7,8-dihydroneopterin triphosphate from GTP: step 1/1. In terms of biological role, converts GTP to 7,8-dihydroneopterin triphosphate. In Methylobacillus flagellatus (strain ATCC 51484 / DSM 6875 / VKM B-1610 / KT), this protein is GTP cyclohydrolase FolE2.